Here is a 209-residue protein sequence, read N- to C-terminus: uncharacterized protein (209 aa).

The protein belongs to the flavoredoxin family. FMN serves as cofactor.

This is an uncharacterized protein from Halalkalibacterium halodurans (strain ATCC BAA-125 / DSM 18197 / FERM 7344 / JCM 9153 / C-125) (Bacillus halodurans).